A 202-amino-acid chain; its full sequence is FMN reductase (NADH) RutF 1 (202 aa).

The disordered stretch occupies residues 168 to 202 (PRTPRSGSAPAEPARAPRAVGARPAEGPALALRSA). A compositionally biased stretch (low complexity) spans 171 to 196 (PRSGSAPAEPARAPRAVGARPAEGPA).

It belongs to the non-flavoprotein flavin reductase family. RutF subfamily.

It carries out the reaction FMNH2 + NAD(+) = FMN + NADH + 2 H(+). Catalyzes the reduction of FMN to FMNH2 which is used to reduce pyrimidine by RutA via the Rut pathway. In Methylorubrum extorquens (strain PA1) (Methylobacterium extorquens), this protein is FMN reductase (NADH) RutF 1.